The sequence spans 521 residues: AAA ATPase forming ring-shaped complexes (521 aa).

Residues 4–44 (TEDLAALNDRLMAKNHALAEALNRAGKELTKAKSRLAQLAQ) adopt a coiled-coil conformation. 235 to 240 (GNGKTM) is an ATP binding site.

The protein belongs to the AAA ATPase family. In terms of assembly, homohexamer. Assembles into a hexameric ring structure.

In Bifidobacterium longum subsp. infantis (strain ATCC 15697 / DSM 20088 / JCM 1222 / NCTC 11817 / S12), this protein is AAA ATPase forming ring-shaped complexes.